A 629-amino-acid polypeptide reads, in one-letter code: Natural resistance-associated macrophage protein 2 homolog (629 aa).

The Cytoplasmic segment spans residues 1 to 151; that stretch reads MNNNNNNKKL…KSKFSIKKLK (151 aa). Residues 50–119 form a disordered region; it reads NVVNGSIEDS…SDIDSSGDSI (70 aa). The segment covering 62–85 has biased composition (low complexity); it reads QQQQQQQQQQQQQQQQQQQQQQQQ. Over residues 96–105 the composition is skewed to basic and acidic residues; that stretch reads DKPFQDRDSN. Over residues 106-118 the composition is skewed to low complexity; sequence IGDGSDIDSSGDS. Residues 152-172 traverse the membrane as a helical segment; that stretch reads SFLGPALFISVGYMDPGNWAT. The Extracellular segment spans residues 173–182; that stretch reads DLEGGSRFGY. Residues 183–203 traverse the membrane as a helical segment; it reads QLMWVLLFSNIMALFLQTLVI. The Cytoplasmic portion of the chain corresponds to 204–224; the sequence is KLALVTKNDLAQQCRKEYSKT. The chain crosses the membrane as a helical span at residues 225–245; sequence VNIFLWLILELAIISTDLAEV. Residues 246–253 are Extracellular-facing; the sequence is IGTAIGLN. A helical membrane pass occupies residues 254–274; sequence ILFGLPLIAGVAITSLDTLLF. The Cytoplasmic segment spans residues 275–286; that stretch reads LAIQRWGIRKLE. The helical transmembrane segment at 287-307 threads the bilayer; it reads LLILLLLSMITMCFVIELFLS. The Extracellular segment spans residues 308–326; sequence KPIASEVFSGFVPRLNSDS. A helical transmembrane segment spans residues 327–347; that stretch reads VMVATGIVGATTMPHNLFLHG. Over 348-376 the chain is Cytoplasmic; it reads SVVKSRKIPNDRRKSVIKQAYRYNVIDTV. The chain crosses the membrane as a helical span at residues 377–397; the sequence is LALNCAFFVNIAILMLAASVF. The Extracellular segment spans residues 398-421; sequence WKSNIQVTELSEAYRLLTKLMDGK. The helical transmembrane segment at 422 to 442 threads the bilayer; sequence LAAVLFGLGLFLAGQSSTITG. The Cytoplasmic portion of the chain corresponds to 443 to 468; it reads TMAGQIVMEGFIKLRIKPWLRRFITR. The chain crosses the membrane as a helical span at residues 469-489; the sequence is LLAIIPAAIVIIVLGDKGTYT. Residues 490-491 are Extracellular-facing; the sequence is LL. Residues 492 to 512 traverse the membrane as a helical segment; it reads IISQVLLSIGLPFAVVPLIIF. Residues 513 to 527 are Cytoplasmic-facing; the sequence is TSSYEIMGEFKNRLS. Residues 528-548 form a helical membrane-spanning segment; that stretch reads IIIINSIIALFIIGLNLATIF. Residues 549–565 lie on the Extracellular side of the membrane; the sequence is QLINDFLHNDSIISKCL. Asn557 carries an N-linked (GlcNAc...) asparagine glycan. The helical transmembrane segment at 566-586 threads the bilayer; that stretch reads TIIFLIPLSIALCCLLLWLII. Over 587–629 the chain is Cytoplasmic; sequence SKINFFTNLLSKIFNNNNNNNNKNIINNNNNYSGNTINNQTIQ.

The protein belongs to the NRAMP family.

The protein localises to the cell membrane. Divalent transition metal (iron and manganese) transporter. The protein is Natural resistance-associated macrophage protein 2 homolog (nramp2) of Dictyostelium discoideum (Social amoeba).